Reading from the N-terminus, the 89-residue chain is Neuropeptide S (89 aa).

The signal sequence occupies residues 1–23 (MIGSLKLSFVLALSLSVMHVLWC). Residues 24–69 (YPVLSSKVPGKPDYFLILLSSCPARLEGSDRLAFLKPILEKTSMKR) constitute a propeptide that is removed on maturation.

Its subcellular location is the secreted. May play an important anorexigenic role. Modulates arousal and anxiety as well as increases locomotor activity. Binds to its receptor NPSR1 with nanomolar affinity to increase intracellular calcium concentrations. The protein is Neuropeptide S (Nps) of Mus musculus (Mouse).